The chain runs to 347 residues: Selenide, water dikinase (347 aa).

C17 is a catalytic residue. Residues K20 and 48–50 (TRD) contribute to the ATP site. A Mg(2+)-binding site is contributed by D51. ATP-binding positions include D68, D91, and 139–141 (GHS). D91 is a binding site for Mg(2+). D227 contacts Mg(2+).

Belongs to the selenophosphate synthase 1 family. Class I subfamily. As to quaternary structure, homodimer. The cofactor is Mg(2+).

It catalyses the reaction hydrogenselenide + ATP + H2O = selenophosphate + AMP + phosphate + 2 H(+). Its function is as follows. Synthesizes selenophosphate from selenide and ATP. The sequence is that of Selenide, water dikinase from Escherichia coli O9:H4 (strain HS).